The sequence spans 471 residues: uncharacterized protein (471 aa).

Positions 13–57 (KGGATIGATPMESDSSVSALSGSSASKVSRRGRRRSHLASKSSAP) are disordered. The segment covering 27–39 (SSVSALSGSSASK) has biased composition (low complexity). A compositionally biased stretch (basic residues) spans 40–50 (VSRRGRRRSHL). CCHC-type zinc fingers lie at residues 397–414 (YACHRCVGFDHKVSECRQ) and 417–434 (SVCRQCGQQGHTAAKCQN). Residues 438–457 (CRNCRHRGQPSGHYMLSNAC) are gag-like cysteine motif.

It to corresponding ORF of B.mori (R1BM).

This is an uncharacterized protein from Drosophila melanogaster (Fruit fly).